A 113-amino-acid chain; its full sequence is U11-theraphotoxin-Hhn1m (113 aa).

Positions 1-21 (MNTVRGTFLLVFGLAASLGQA) are cleaved as a signal peptide. The propeptide occupies 22 to 74 (DKNENRREMQKKTEQGKSYLNFAENLLLQKLEELEAKLLEKHSKKSKNSRQKR). 3 disulfide bridges follow: Cys75-Cys90, Cys82-Cys95, and Cys89-Cys110.

This sequence belongs to the neurotoxin 14 (magi-1) family. 01 (HNTX-16) subfamily. As to expression, expressed by the venom gland.

Its subcellular location is the secreted. Probable ion channel inhibitor. The polypeptide is U11-theraphotoxin-Hhn1m (Cyriopagopus hainanus (Chinese bird spider)).